A 270-amino-acid polypeptide reads, in one-letter code: MHPALKYMRQDRLPHIFCSGCGNGIVMNCFLKAIEELNIKPEDYIAVSGIGCSSRVPGYLYCDSLHTTHGRPIAFATGIKIARPDKHVVVFTGDGDLAAIGGNHFIHGCRRNIDLTVICINNNIYGMTGGQVSPTTPYGKKATTAPYGSIENTMDLCKMAIAAGATYVARWTTAHPIQLVRSIKKGIQKKGFAFIEVVSQCPTYYGRFNISRKPADMIKFLKENSIHLNKAKDMSEEELNGKIVVGEFLDIEKPEFVEELHKLIEKLKSE.

As to quaternary structure, heterotetramer of the KorA, KorB, KorC and KorD subunits.

It carries out the reaction 2 oxidized [2Fe-2S]-[ferredoxin] + 2-oxoglutarate + CoA = succinyl-CoA + 2 reduced [2Fe-2S]-[ferredoxin] + CO2 + H(+). This is 2-oxoglutarate synthase subunit KorB (korB) from Methanocaldococcus jannaschii (strain ATCC 43067 / DSM 2661 / JAL-1 / JCM 10045 / NBRC 100440) (Methanococcus jannaschii).